Here is a 1004-residue protein sequence, read N- to C-terminus: Bifunctional glutamine synthetase adenylyltransferase/adenylyl-removing enzyme (1004 aa).

Residues 1-497 (MCCTTVVVVR…LHAKLFYQPL (497 aa)) are adenylyl removase. The adenylyl transferase stretch occupies residues 502–1004 (GPASLEIRHG…KTFVRKVFGS (503 aa)).

This sequence belongs to the GlnE family. Mg(2+) serves as cofactor.

It catalyses the reaction [glutamine synthetase]-O(4)-(5'-adenylyl)-L-tyrosine + phosphate = [glutamine synthetase]-L-tyrosine + ADP. It carries out the reaction [glutamine synthetase]-L-tyrosine + ATP = [glutamine synthetase]-O(4)-(5'-adenylyl)-L-tyrosine + diphosphate. Its function is as follows. Involved in the regulation of glutamine synthetase GlnA, a key enzyme in the process to assimilate ammonia. When cellular nitrogen levels are high, the C-terminal adenylyl transferase (AT) inactivates GlnA by covalent transfer of an adenylyl group from ATP to specific tyrosine residue of GlnA, thus reducing its activity. Conversely, when nitrogen levels are low, the N-terminal adenylyl removase (AR) activates GlnA by removing the adenylyl group by phosphorolysis, increasing its activity. The regulatory region of GlnE binds the signal transduction protein PII (GlnB) which indicates the nitrogen status of the cell. This Mycobacterium leprae (strain TN) protein is Bifunctional glutamine synthetase adenylyltransferase/adenylyl-removing enzyme.